We begin with the raw amino-acid sequence, 301 residues long: tRNA dimethylallyltransferase (301 aa).

Gly5–Ser12 contributes to the ATP binding site. Thr7–Ser12 lines the substrate pocket. Residues Asp30–Gln33 are interaction with substrate tRNA.

Belongs to the IPP transferase family. As to quaternary structure, monomer. It depends on Mg(2+) as a cofactor.

It catalyses the reaction adenosine(37) in tRNA + dimethylallyl diphosphate = N(6)-dimethylallyladenosine(37) in tRNA + diphosphate. In terms of biological role, catalyzes the transfer of a dimethylallyl group onto the adenine at position 37 in tRNAs that read codons beginning with uridine, leading to the formation of N6-(dimethylallyl)adenosine (i(6)A). The chain is tRNA dimethylallyltransferase from Rhodopseudomonas palustris (strain TIE-1).